The chain runs to 510 residues: NAD(P)H-quinone oxidoreductase subunit 2 B, chloroplastic (510 aa).

A run of 13 helical transmembrane segments spans residues 24–44, 57–77, 99–119, 124–144, 149–169, 183–203, 227–247, 295–315, 323–343, 354–374, 392–412, 418–438, and 482–502; these read LLLFDGSFIFPECILIFGLIL, IPWLYFISSTSLVMSITALLF, IFQFLILLCSTLCIPLSVEYI, MAITEFLLFVLTATLGGMFLC, LITIFVAPECFSLCSYLLSGY, YLLMGGASSSILVHGFSWLYG, PGISIALIFITVGIGFKLSPA, WHLLLEILAILSMILGNLIAI, MLAYSSIGQIGYVIIGIIVGD, YMLFYISMNLGTFACIVSFGL, AFLALSLALCLLSLGGLPPLA, LHLFWCGWQAGLYFLVSIGLL, and LSMIVCVIASTIPGISMNPII.

The protein belongs to the complex I subunit 2 family. As to quaternary structure, NDH is composed of at least 16 different subunits, 5 of which are encoded in the nucleus.

Its subcellular location is the plastid. The protein resides in the chloroplast thylakoid membrane. It catalyses the reaction a plastoquinone + NADH + (n+1) H(+)(in) = a plastoquinol + NAD(+) + n H(+)(out). The catalysed reaction is a plastoquinone + NADPH + (n+1) H(+)(in) = a plastoquinol + NADP(+) + n H(+)(out). Functionally, NDH shuttles electrons from NAD(P)H:plastoquinone, via FMN and iron-sulfur (Fe-S) centers, to quinones in the photosynthetic chain and possibly in a chloroplast respiratory chain. The immediate electron acceptor for the enzyme in this species is believed to be plastoquinone. Couples the redox reaction to proton translocation, and thus conserves the redox energy in a proton gradient. The protein is NAD(P)H-quinone oxidoreductase subunit 2 B, chloroplastic of Morus indica (Mulberry).